The following is a 272-amino-acid chain: Putative protein-disulfide oxidoreductase RP025 (272 aa).

The first 21 residues, 1-21, serve as a signal peptide directing secretion; it reads MRNIFIVLIFLFLSNCSEVKA. The Thioredoxin domain maps to 74–263; that stretch reads DSREQKKPEI…ISKAVDKALD (190 aa). Residues Cys-116 and Cys-119 are joined by a disulfide bond.

It belongs to the thioredoxin family. DsbA subfamily.

It is found in the periplasm. In terms of biological role, may be required for disulfide bond formation in some proteins. The sequence is that of Putative protein-disulfide oxidoreductase RP025 from Rickettsia prowazekii (strain Madrid E).